The chain runs to 249 residues: Cytochrome c oxidase subunit 2 (249 aa).

The first 13 residues, M1–N13, serve as a signal peptide directing secretion. Residues D14–N40 lie on the Mitochondrial intermembrane side of the membrane. The helical transmembrane segment at I41 to T62 threads the bilayer. Over Y63–E80 the chain is Mitochondrial matrix. Residues I81–C105 form a helical membrane-spanning segment. At D106 to Q249 the chain is on the mitochondrial intermembrane side. Residues H184, C219, E221, C223, H227, and M230 each contribute to the Cu cation site. E221 provides a ligand contact to Mg(2+).

It belongs to the cytochrome c oxidase subunit 2 family. In terms of assembly, component of the cytochrome c oxidase (complex IV, CIV), a multisubunit enzyme composed of a catalytic core of 3 subunits and several supernumerary subunits. The complex exists as a monomer or a dimer and forms supercomplexes (SCs) in the inner mitochondrial membrane with ubiquinol-cytochrome c oxidoreductase (cytochrome b-c1 complex, complex III, CIII). Cu cation is required as a cofactor. Post-translationally, the signal sequence of COX2 is processed by IMP1.

It localises to the mitochondrion inner membrane. It carries out the reaction 4 Fe(II)-[cytochrome c] + O2 + 8 H(+)(in) = 4 Fe(III)-[cytochrome c] + 2 H2O + 4 H(+)(out). Its function is as follows. Component of the cytochrome c oxidase, the last enzyme in the mitochondrial electron transport chain which drives oxidative phosphorylation. The respiratory chain contains 3 multisubunit complexes succinate dehydrogenase (complex II, CII), ubiquinol-cytochrome c oxidoreductase (cytochrome b-c1 complex, complex III, CIII) and cytochrome c oxidase (complex IV, CIV), that cooperate to transfer electrons derived from NADH and succinate to molecular oxygen, creating an electrochemical gradient over the inner membrane that drives transmembrane transport and the ATP synthase. Cytochrome c oxidase is the component of the respiratory chain that catalyzes the reduction of oxygen to water. Electrons originating from reduced cytochrome c in the intermembrane space (IMS) are transferred via the dinuclear copper A center (CU(A)) of subunit 2 and heme A of subunit 1 to the active site in subunit 1, a binuclear center (BNC) formed by heme A3 and copper B (CU(B)). The BNC reduces molecular oxygen to 2 water molecules using 4 electrons from cytochrome c in the IMS and 4 protons from the mitochondrial matrix. This chain is Cytochrome c oxidase subunit 2 (COX2), found in Maudiozyma exigua (Yeast).